Here is a 794-residue protein sequence, read N- to C-terminus: EVI5-like protein (794 aa).

Polar residues predominate over residues methionine 1 to leucine 30. Disordered regions lie at residues methionine 1–glutamate 36 and glutamate 49–alanine 75. The segment covering methionine 55 to alanine 75 has biased composition (low complexity). The region spanning glycine 115–glycine 300 is the Rab-GAP TBC domain. 2 coiled-coil regions span residues lysine 358–asparagine 449 and glutamate 569–proline 709. The residue at position 685 (serine 685) is a Phosphoserine. The disordered stretch occupies residues leucine 766–asparagine 794.

May interact with RAB10.

Functionally, functions as a GTPase-activating protein (GAP) with a broad specificity. The polypeptide is EVI5-like protein (EVI5L) (Homo sapiens (Human)).